A 285-amino-acid chain; its full sequence is MMSDYNWFEGIPFPAISYQREILEDIRNKFVVKEEDLLILTYPKSGTNWLIEIVCLIQTKGDPKWIQTVPIWNRSPWIETDIGYSALINKEGPRLITSHLPIHLFSKSFFSSKAKAIYLVRNPRDILVSGYFFWGNTNLVKNPGSLGTYFEWFLKGNVLFGSWFEHVRGWLSMREWDNFLVLYYEDIKKDTKGTIKKICDFLGKNLGPDELDLVLKYSSFQAMKENNMSNFSLIKEDQVTNGLKLMRKGTIGDWKNHFTVAQAEAFDKVFQEKMAGFPPGIFPWE.

Lys44, Ser45, Gly46, Thr47, Asn48, and Trp49 together coordinate 3'-phosphoadenylyl sulfate. His99 (proton acceptor) is an active-site residue. Residues Arg121, Ser129, Tyr184, Ser218, Met223, Arg247, Lys248, and Gly249 each coordinate 3'-phosphoadenylyl sulfate.

Belongs to the sulfotransferase 1 family. Homodimer. In terms of tissue distribution, highly expressed in liver.

The protein resides in the cytoplasm. The catalysed reaction is an alcohol + 3'-phosphoadenylyl sulfate = an alkyl sulfate + adenosine 3',5'-bisphosphate + H(+). It catalyses the reaction taurolithocholate + 3'-phosphoadenylyl sulfate = taurolithocholate 3-sulfate + adenosine 3',5'-bisphosphate + H(+). It carries out the reaction pregnenolone + 3'-phosphoadenylyl sulfate = pregnenolone sulfate + adenosine 3',5'-bisphosphate + H(+). The enzyme catalyses 3beta-hydroxyandrost-5-en-17-one + 3'-phosphoadenylyl sulfate = dehydroepiandrosterone 3-sulfate + adenosine 3',5'-bisphosphate + H(+). The catalysed reaction is lithocholate + 3'-phosphoadenylyl sulfate = lithocholate sulfate + adenosine 3',5'-bisphosphate + H(+). It catalyses the reaction (24S)-hydroxycholesterol + 3'-phosphoadenylyl sulfate = (24S)-hydroxycholesterol 24-sulfate + adenosine 3',5'-bisphosphate + H(+). It carries out the reaction (24S)-hydroxycholesterol + 3'-phosphoadenylyl sulfate = (24S)-hydroxycholesterol 3-sulfate + adenosine 3',5'-bisphosphate + H(+). The enzyme catalyses (24S)-hydroxycholesterol 24-sulfate + 3'-phosphoadenylyl sulfate = (24S)-hydroxycholesterol 3,24-disulfate + adenosine 3',5'-bisphosphate + H(+). The catalysed reaction is androsterone + 3'-phosphoadenylyl sulfate = androsterone 3alpha-sulfate + adenosine 3',5'-bisphosphate + H(+). Sulfotransferase that utilizes 3'-phospho-5'-adenylyl sulfate (PAPS) as sulfonate donor to catalyze the sulfonation of steroids and bile acids in the liver and adrenal glands. Mediates the sulfation of a wide range of steroids and sterols, including pregnenolone, androsterone, DHEA, bile acids, cholesterol and as well many xenobiotics that contain alcohol and phenol functional groups. Sulfonation increases the water solubility of most compounds, and therefore their renal excretion, but it can also result in bioactivation to form active metabolites. Plays an important role in maintening steroid and lipid homeostasis. Plays a key role in bile acid metabolism. In addition, catalyzes the metabolic activation of potent carcinogenic polycyclic arylmethanols. The chain is Sulfotransferase 2A1 (Sult2a1) from Mus musculus (Mouse).